Here is a 206-residue protein sequence, read N- to C-terminus: MPIVGLFNKEGQKITDFELSDKVFGVEVNQYVMHQVVVALLANKRQGTQSAKTRAEVSGGGIKPWRQKGTGRARQGSIRSPQWIHGGVVFAVKPRSYRISVPKSARRLAMKSALSSKVEENQIVVLESLEMDTPKTKEVVKILDAFEAKKTLIVTAESNQNVYKSARNIQGVSVIPVNNLNVYDLLKFDKLIITKDAVSKIEEVYA.

The tract at residues 51–76 (AKTRAEVSGGGIKPWRQKGTGRARQG) is disordered.

It belongs to the universal ribosomal protein uL4 family. In terms of assembly, part of the 50S ribosomal subunit.

In terms of biological role, one of the primary rRNA binding proteins, this protein initially binds near the 5'-end of the 23S rRNA. It is important during the early stages of 50S assembly. It makes multiple contacts with different domains of the 23S rRNA in the assembled 50S subunit and ribosome. Functionally, forms part of the polypeptide exit tunnel. The sequence is that of Large ribosomal subunit protein uL4 from Clostridium kluyveri (strain ATCC 8527 / DSM 555 / NBRC 12016 / NCIMB 10680 / K1).